The sequence spans 137 residues: Peptide methionine sulfoxide reductase MsrB (137 aa).

The 123-residue stretch at 7–129 (PEELKNGLSE…NSASLSFTDE (123 aa)) folds into the MsrB domain. The Zn(2+) site is built by C46, C49, C95, and C98. C118 (nucleophile) is an active-site residue.

This sequence belongs to the MsrB Met sulfoxide reductase family. Requires Zn(2+) as cofactor.

The catalysed reaction is L-methionyl-[protein] + [thioredoxin]-disulfide + H2O = L-methionyl-(R)-S-oxide-[protein] + [thioredoxin]-dithiol. This Klebsiella pneumoniae subsp. pneumoniae (strain ATCC 700721 / MGH 78578) protein is Peptide methionine sulfoxide reductase MsrB.